A 165-amino-acid chain; its full sequence is Putative pre-16S rRNA nuclease (165 aa).

This sequence belongs to the YqgF nuclease family.

The protein localises to the cytoplasm. Could be a nuclease involved in processing of the 5'-end of pre-16S rRNA. The chain is Putative pre-16S rRNA nuclease from Sinorhizobium medicae (strain WSM419) (Ensifer medicae).